The sequence spans 1092 residues: DNA polymerase II large subunit (1092 aa).

It belongs to the archaeal DNA polymerase II family. Heterodimer of a large subunit and a small subunit.

The catalysed reaction is DNA(n) + a 2'-deoxyribonucleoside 5'-triphosphate = DNA(n+1) + diphosphate. The enzyme catalyses Exonucleolytic cleavage in the 3'- to 5'-direction to yield nucleoside 5'-phosphates.. In terms of biological role, possesses two activities: a DNA synthesis (polymerase) and an exonucleolytic activity that degrades single-stranded DNA in the 3'- to 5'-direction. Has a template-primer preference which is characteristic of a replicative DNA polymerase. This Methanothermobacter thermautotrophicus (strain ATCC 29096 / DSM 1053 / JCM 10044 / NBRC 100330 / Delta H) (Methanobacterium thermoautotrophicum) protein is DNA polymerase II large subunit (polC).